A 526-amino-acid polypeptide reads, in one-letter code: Keratin, type I cytoskeletal 10 (526 aa).

Over residues 1–15 (MSVRYSSSKQYSSSR) the composition is skewed to low complexity. The interval 1 to 29 (MSVRYSSSKQYSSSRSGGGGGGGSSLRIS) is disordered. The tract at residues 1–126 (MSVRYSSSKQ…FGDGGLISGN (126 aa)) is head. Phosphoserine is present on residues Ser14, Ser16, Ser34, Ser45, Ser48, and Ser151. The segment at 127 to 162 (QKITMQNLNDRLASYLDKVRALEESNYELEVKIKEW) is coil 1A. The region spanning 127–441 (QKITMQNLND…SLLEGEGSSG (315 aa)) is the IF rod domain. Residues 163-183 (YEKYGNSRQREPRDYSKYYQT) are linker 1. A coil 1B region spans residues 184–275 (IDDLKNQIFN…KNHEEEMRDL (92 aa)). Residues 276-298 (QNVSTGDVNVEMNAAPGVDLTEL) are linker 12. Residues 299-437 (LNNMRSQYEQ…QTYRSLLEGE (139 aa)) form a coil 2 region. The interval 438–526 (GSSGGGSYGG…GESSSKGPRY (89 aa)) is tail. Positions 458 to 505 (GGGGYGGGSSSGGYGGGSSSGGGHGGSSGGSYGGGSSSGGGHGGGSSS) are enriched in gly residues. Residues 458–526 (GGGGYGGGSS…GESSSKGPRY (69 aa)) are disordered. The segment covering 506–526 (GGHKSTTTGSVGESSSKGPRY) has biased composition (low complexity).

The protein belongs to the intermediate filament family. As to quaternary structure, heterotetramer of two type I and two type II keratins. Heterodimer with KRT1. Two heterodimers of KRT1 and KRT10 form a heterotetramer. The KRT10 subunit in the heterotetramer is probably disulfide-linked.

Its subcellular location is the secreted. The protein resides in the extracellular space. The protein localises to the cell surface. It is found in the cytoplasm. In terms of biological role, plays a role in the establishment of the epidermal barrier on plantar skin. Involved in the maintenance of cell layer development and keratin filament bundles in suprabasal cells of the epithelium. The chain is Keratin, type I cytoskeletal 10 (KRT10) from Bos taurus (Bovine).